A 559-amino-acid chain; its full sequence is Tryprostatin B 6-hydroxylase (559 aa).

3 consecutive transmembrane segments (helical) span residues 13–35 (PSVMKCGYLATAGLIGICTHLSY), 48–65 (YVRFHLCLTMGVAALLYA), and 82–104 (VSLLMATYLVGLFASLLLYRTLF). Residue cysteine 502 coordinates heme.

This sequence belongs to the cytochrome P450 family. Requires heme as cofactor.

It is found in the membrane. It carries out the reaction tryprostatin B + reduced [NADPH--hemoprotein reductase] + O2 = 6-hydroxytryprostatin B + oxidized [NADPH--hemoprotein reductase] + H2O + H(+). Its pathway is mycotoxin biosynthesis. Functionally, cytochrome P450 monooxygenase; part of the gene cluster that mediates the biosynthesis of fumitremorgins, indole alkaloids that carry not only intriguing chemical structures, but also interesting biological and pharmacological activities. The biosynthesis of fumitremorgin-type alkaloids begins by condensation of the two amino acids L-tryptophan and L-proline to brevianamide F, catalyzed by the non-ribosomal peptide synthetase ftmA. Brevianamide F is then prenylated by the prenyltransferase ftmPT1/ftmB in the presence of dimethylallyl diphosphate, resulting in the formation of tryprostatin B. The three cytochrome P450 monooxygenases, ftmP450-1/ftmC, ftmP450-2/ftmE and ftmP450-3/FtmG, are responsible for the conversion of tryprostatin B to 6-hydroxytryprostatin B, tryprostatin A to fumitremorgin C and fumitremorgin C to 12,13-dihydroxyfumitremorgin C, respectively. The putative methyltransferase ftmMT/ftmD is expected for the conversion of 6-hydroxytryprostatin B to tryprostatin A. FtmPT2/FtmH catalyzes the prenylation of 12,13-dihydroxyfumitre-morgin C in the presence of dimethylallyl diphosphate, resulting in the formation of fumitremorgin B. Fumitremorgin B is further converted to verruculogen by ftmOx1/ftmF via the insertion of an endoperoxide bond between the two prenyl moieties. In some fungal species, verruculogen is further converted to fumitremorgin A, but the enzymes involved in this step have not been identified yet. In Aspergillus fumigatus (Neosartorya fumigata), this protein is Tryprostatin B 6-hydroxylase.